Reading from the N-terminus, the 156-residue chain is Succinate dehydrogenase [ubiquinone] cytochrome b small subunit 1, mitochondrial (156 aa).

The transit peptide at 1 to 25 (MLSAVRRAIPLSARILRTSLIQRCA) directs the protein to the mitochondrion. The Mitochondrial matrix segment spans residues 26–59 (GATSAAVTGAAPPQFDPIAAEKGFKPLHSHGTLF). A helical transmembrane segment spans residues 60 to 78 (KIERYFAAAMVPLIPAAYF). Residues 79 to 83 (IHGRE) lie on the Mitochondrial intermembrane side of the membrane. Residues 84-104 (MDLCLALALTLHVHWGVWGVV) form a helical membrane-spanning segment. Residue His-95 coordinates heme b. Residues 105 to 119 (NDYGRPFVLGDTLAA) lie on the Mitochondrial matrix side of the membrane. Tyr-107 provides a ligand contact to a rhodoquinol. The chain crosses the membrane as a helical span at residues 120–141 (AVRVGAYIFTACLLAGLLYFNE). Residues 142–156 (HDVGLTRAFEMVWEL) are Mitochondrial intermembrane-facing.

This sequence belongs to the CybS family. As to quaternary structure, component of the mitochondrial electron transport chain complex II composed of four subunits: a flavoprotein (Fp), an iron-sulfur protein (Ip), and a large cytochrome b (CybL) subunit and a small cytochrome b (CybS) subunit. There are 2 developmental stage-specific forms of complex II which have the Ip and CybL subunits in common. Complex II from the free-living larvae (aerobic environment) acts as a succinate dehydrogenase and is composed of the common subunit Ip and CybL and the stage specific subunits FpL and CybSL. Complex II from parasitic larvae and adults (anaerobic environment) acts as a fumarate reductase and is composed of the common subunit Ip and CybL and the stage specific subunits FpA and CybSA. Heme b serves as cofactor. In terms of tissue distribution, expressed in adult muscles (at protein level).

The protein resides in the mitochondrion inner membrane. Membrane-bound small subunit (CybS) of the mitochondrial electron transport chain complex II, which together with the membrane-bound large subunit (CybL), anchor the catalytic subunits to the inner mitochondria membrane. During the parasitic larvae and adult stages, which occur in an anaerobic environment, complex II acts as a fumarate reductase by transferring electrons from rhodoquinol to fumarate. The polypeptide is Succinate dehydrogenase [ubiquinone] cytochrome b small subunit 1, mitochondrial (Ascaris suum (Pig roundworm)).